Consider the following 354-residue polypeptide: MNILERAALTALHRMDPEKAHSLSLSALRSGLVPLPGPVTSPRLATVVGGLVLPNPVGLAAGYDKNAVALAALMRAGFGFLEVGAATPRPQPGNPQPRLFRLTEDRAAINRFGFNNDGAATICARLAMRPRGAVPVGLNLGANKDSPDRAADFAAVLAACGPHADFATVNVSSPNTERLRDLQGRQALTALLEGVMQVQAGFARPVPVFLKIAPDLSDADLAEIAEVALASGIAGIVATNTTLARDGLRSAHARETGGLSGAPLFERSTRVLARLSELTEGRLPLIGVGGVASAEEAYAKIRAGASAVQLYTAMVYQGIGLAARIARGLDALLLRDGFGSVAEAVGTGRADWLT.

FMN-binding positions include 61–65 (AGYDK) and Ala-85. Position 65 (Lys-65) interacts with substrate. 110–114 (NRFGF) contributes to the substrate binding site. Positions 139 and 170 each coordinate FMN. Asn-170 contacts substrate. Ser-173 functions as the Nucleophile in the catalytic mechanism. Substrate is bound at residue Asn-175. Lys-211 and Thr-239 together coordinate FMN. 240–241 (NT) contributes to the substrate binding site. FMN is bound by residues Gly-261, Gly-290, and 311 to 312 (YT).

This sequence belongs to the dihydroorotate dehydrogenase family. Type 2 subfamily. As to quaternary structure, monomer. The cofactor is FMN.

The protein localises to the cell membrane. The catalysed reaction is (S)-dihydroorotate + a quinone = orotate + a quinol. Its pathway is pyrimidine metabolism; UMP biosynthesis via de novo pathway; orotate from (S)-dihydroorotate (quinone route): step 1/1. Its function is as follows. Catalyzes the conversion of dihydroorotate to orotate with quinone as electron acceptor. This Cereibacter sphaeroides (strain ATCC 17023 / DSM 158 / JCM 6121 / CCUG 31486 / LMG 2827 / NBRC 12203 / NCIMB 8253 / ATH 2.4.1.) (Rhodobacter sphaeroides) protein is Dihydroorotate dehydrogenase (quinone).